The following is a 741-amino-acid chain: MTMKQYTMSKMNAETQTQTRESFPTDDPAVVTCGLPYANGDLHIGHLRTYVGGDIFSRALKRLGQETAFVSGSDMHGTPVAVNAAEEGVTPESFALRHHEQYETTFPQFGIEFDNYGHTHDETNVEMTREIVEALIQAGYVYEREIPVAYDPAADQWLPDRFVNGTCPYCGAHARGDECDEGCGRHLEPGEIETPVSTITGNDAEYRRREHQFFAVSELQSYLSSFLDRLEGTTNAQNQPREWVEGELQDWCITRDMDWGVDYPDDNDLVLYVWVDAPIEYISSTKQYAERVGTDSFDWKNAWRDIPGVRSHSSSSAKDSSEGNSPSNINNGGEIIHIIGRDIIQHHTVFWPAMLHAAGYTEPRAVMASGFITLEGKGFSTSRNRAVWADEYLAEGFHPDLLRYYLATNGGFQQDVDFSWSRFRERVNNELVGTVGNFIYRSLLFAAREFDGTPDVALSDSVEERIETAIDAFTAGVNEYSVRAVGDAAVKLAQFGNEYIQHHEPWKLSNDDPQKQQVMRDCIQLAKAIAVLFEPVTPAAAERVWADLGESGDIHTVGIESALVAPPQTFDEPTELFEKIPEERVDELTAKLADRVTDPTDDDDSDTDTETGTDVAETTNESHSESNMTEIDPIADERIDFEEFEELDLRVAEIIETEPIEDADKLARIVVDLGIEQRQLVAGIRQLHDLDDLIGETVVIVANLEKAEIFGVESNGMLLAAGADADLLTTREDADPGTSIQ.

Polar residues predominate over residues 1-22; that stretch reads MTMKQYTMSKMNAETQTQTRES. Residues 1-25 are disordered; it reads MTMKQYTMSKMNAETQTQTRESFPT. Positions 36-46 match the 'HIGH' region motif; that stretch reads PYANGDLHIGH. Residues Cys-167, Cys-170, Cys-179, and Cys-183 each contribute to the Zn(2+) site. Residues 309–329 form a disordered region; the sequence is VRSHSSSSAKDSSEGNSPSNI. Over residues 311-329 the composition is skewed to low complexity; the sequence is SHSSSSAKDSSEGNSPSNI. Residue Thr-381 coordinates ATP. Positions 591 to 629 are disordered; sequence KLADRVTDPTDDDDSDTDTETGTDVAETTNESHSESNMT. Residues 599-611 show a composition bias toward acidic residues; the sequence is PTDDDDSDTDTET. Polar residues predominate over residues 616 to 629; sequence AETTNESHSESNMT. Residues 643–741 form the tRNA-binding domain; the sequence is EFEELDLRVA…EDADPGTSIQ (99 aa).

The protein belongs to the class-I aminoacyl-tRNA synthetase family. MetG type 1 subfamily. Homodimer. Requires Zn(2+) as cofactor.

It localises to the cytoplasm. It carries out the reaction tRNA(Met) + L-methionine + ATP = L-methionyl-tRNA(Met) + AMP + diphosphate. Functionally, is required not only for elongation of protein synthesis but also for the initiation of all mRNA translation through initiator tRNA(fMet) aminoacylation. The polypeptide is Methionine--tRNA ligase (Haloquadratum walsbyi (strain DSM 16790 / HBSQ001)).